The following is an 88-amino-acid chain: Small ribosomal subunit protein uS15c (88 aa).

It belongs to the universal ribosomal protein uS15 family. Part of the 30S ribosomal subunit.

The protein resides in the plastid. It localises to the chloroplast. This chain is Small ribosomal subunit protein uS15c (rps15), found in Marchantia polymorpha (Common liverwort).